The chain runs to 115 residues: Phosphoribosyl-AMP cyclohydrolase (115 aa).

Asp-80 lines the Mg(2+) pocket. Residue Cys-81 participates in Zn(2+) binding. Mg(2+)-binding residues include Asp-82 and Asp-84. Residues Cys-97 and Cys-104 each contribute to the Zn(2+) site.

Belongs to the PRA-CH family. As to quaternary structure, homodimer. Mg(2+) is required as a cofactor. Requires Zn(2+) as cofactor.

The protein resides in the cytoplasm. The catalysed reaction is 1-(5-phospho-beta-D-ribosyl)-5'-AMP + H2O = 1-(5-phospho-beta-D-ribosyl)-5-[(5-phospho-beta-D-ribosylamino)methylideneamino]imidazole-4-carboxamide. The protein operates within amino-acid biosynthesis; L-histidine biosynthesis; L-histidine from 5-phospho-alpha-D-ribose 1-diphosphate: step 3/9. Catalyzes the hydrolysis of the adenine ring of phosphoribosyl-AMP. The protein is Phosphoribosyl-AMP cyclohydrolase of Mycobacterium sp. (strain MCS).